The primary structure comprises 1308 residues: Receptor tyrosine-protein kinase erbB-4 (1308 aa).

The signal sequence occupies residues 1–25 (MKPATGLWVWVSLLVAAGTVQPSDS). The Extracellular portion of the chain corresponds to 26–651 (QSVCAGTENK…STLPQHARTP (626 aa)). The cysteines at positions 29 and 56 are disulfide-linked. Asparagine 138, asparagine 174, and asparagine 181 each carry an N-linked (GlcNAc...) asparagine glycan. 12 disulfide bridges follow: cysteine 156–cysteine 186, cysteine 189–cysteine 197, cysteine 193–cysteine 205, cysteine 213–cysteine 221, cysteine 217–cysteine 229, cysteine 230–cysteine 238, cysteine 234–cysteine 246, cysteine 249–cysteine 258, cysteine 262–cysteine 289, cysteine 293–cysteine 304, cysteine 308–cysteine 323, and cysteine 326–cysteine 330. N-linked (GlcNAc...) asparagine glycosylation is present at asparagine 253. N-linked (GlcNAc...) asparagine glycans are attached at residues asparagine 358, asparagine 410, asparagine 473, and asparagine 495. 10 disulfides stabilise this stretch: cysteine 503/cysteine 512, cysteine 507/cysteine 520, cysteine 523/cysteine 532, cysteine 536/cysteine 552, cysteine 555/cysteine 569, cysteine 559/cysteine 577, cysteine 580/cysteine 589, cysteine 593/cysteine 614, cysteine 617/cysteine 625, and cysteine 621/cysteine 633. A glycan (N-linked (GlcNAc...) asparagine) is linked at asparagine 548. N-linked (GlcNAc...) asparagine glycosylation occurs at asparagine 576. N-linked (GlcNAc...) asparagine glycosylation occurs at asparagine 620. A helical membrane pass occupies residues 652 to 675 (LIAAGVIGGLFILVIVGLTFAVYV). The short motif at 676–684 (RRKSIKKKR) is the Nuclear localization signal element. The Cytoplasmic segment spans residues 676 to 1308 (RRKSIKKKRA…PPYRHRNTVV (633 aa)). One can recognise a Protein kinase domain in the interval 718-985 (LKRVKVLGSG…RMARDPQRYL (268 aa)). Residues 724–732 (LGSGAFGTV), lysine 751, 797–799 (QLM), and 843–848 (DLAARN) contribute to the ATP site. Catalysis depends on aspartate 843, which acts as the Proton acceptor. Tyrosine 875, tyrosine 1035, tyrosine 1056, tyrosine 1150, tyrosine 1162, tyrosine 1188, tyrosine 1202, tyrosine 1242, tyrosine 1258, and tyrosine 1284 each carry phosphotyrosine; by autocatalysis. 2 short sequence motifs (PPxY motif) span residues 1032–1035 (PPIY) and 1053–1056 (PPAY). Residues 1117–1150 (PHVQEDSSTQRYSADPTVFAPERSPRGELDEEGY) are disordered. The PPxY motif 3 motif lies at 1298–1301 (PPPY). The short motif at 1306–1308 (TVV) is the PDZ-binding element.

It belongs to the protein kinase superfamily. Tyr protein kinase family. EGF receptor subfamily. As to quaternary structure, monomer in the absence of bound ligand. Homodimer or heterodimer with another ERBB family member upon ligand binding, thus forming heterotetramers. Interacts with EGFR and ERBB2. Interacts with CBFA2T3. Interacts with DLG2 (via its PDZ domain), DLG3 (via its PDZ domain), DLG4 (via its PDZ domain) and SNTB2 (via its PDZ domain). Interacts with MUC1. Interacts (via its PPxy motifs) with WWOX. Interacts (via the PPxY motif 3 of isoform JM-A CYT-2) with YAP1 (via the WW domain 1 of isoform 1). Interacts (isoform JM-A CYT-1 and isoform JM-B CYT-1) with WWP1. Interacts (via its intracellular domain) with TRIM28. Interacts (via the intracellular domains of both CYT-1 and CYT-2 isoforms) with KAP1; the interaction does not phosphorylate KAP1 but represses ERBB4-mediated transcriptional activity. Interacts with PRPU, DDX23, MATR3, RBM15, ILF3, KAP1, U5S1, U2SURP, ITCH, HNRNPU, AP2A1, NULC, LEO1, WWP2, IGHG1, HXK1, GRB7 and SRRT. Interacts (phosphorylated isoform JM-A CYT-1 and isoform JM-B CYT-1) with PIK3R1. Interacts with SHC1. Interacts with GRB2. Interacts (soluble intracellular domain) with STAT5A. Interacts (soluble intracellular domain) with BCL2. Interacts (phosphorylated) with STAT1. In terms of processing, isoform JM-A CYT-1 and isoform JM-A CYT-2 are processed by ADAM17. Proteolytic processing in response to ligand or 12-O-tetradecanoylphorbol-13-acetate stimulation results in the production of 120 kDa soluble receptor forms and intermediate membrane-anchored 80 kDa fragments (m80HER4), which are further processed by a presenilin-dependent gamma-secretase to release a cytoplasmic intracellular domain (E4ICD; E4ICD1/s80Cyt1 or E4ICD2/s80Cyt2, depending on the isoform). Membrane-anchored 80 kDa fragments of the processed isoform JM-A CYT-1 are more readily degraded by the proteasome than fragments of isoform JM-A CYT-2, suggesting a prevalence of E4ICD2 over E4ICD1. Isoform JM-B CYT-1 and isoform JM-B CYT-2 lack the ADAM17 cleavage site and are not processed by ADAM17, precluding further processing by gamma-secretase. Post-translationally, autophosphorylated on tyrosine residues in response to ligand binding. Autophosphorylation occurs in trans, i.e. one subunit of the dimeric receptor phosphorylates tyrosine residues on the other subunit. Ligands trigger phosphorylation at specific tyrosine residues, thereby creating binding sites for scaffold proteins and effectors. Constitutively phosphorylated at a basal level when overexpressed in heterologous systems; ligand binding leads to increased phosphorylation. Phosphorylation at Tyr-1035 is important for interaction with STAT1. Phosphorylation at Tyr-1056 is important for interaction with PIK3R1. Phosphorylation at Tyr-1242 is important for interaction with SHC1. Phosphorylation at Tyr-1188 may also contribute to the interaction with SHC1. Isoform JM-A CYT-2 is constitutively phosphorylated on tyrosine residues in a ligand-independent manner. E4ICD2 but not E4ICD1 is phosphorylated on tyrosine residues. Ubiquitinated. During mitosis, the ERBB4 intracellular domain is ubiquitinated by the APC/C complex and targeted to proteasomal degradation. Isoform JM-A CYT-1 and isoform JM-B CYT-1 are ubiquitinated by WWP1. The ERBB4 intracellular domain (E4ICD1) is ubiquitinated, and this involves NEDD4. In terms of tissue distribution, expressed at highest levels in brain, heart, kidney, in addition to skeletal muscle, parathyroid, cerebellum, pituitary, spleen, testis and breast. Lower levels in thymus, lung, salivary gland, and pancreas. Isoform JM-A CYT-1 and isoform JM-B CYT-1 are expressed in cerebellum, but only the isoform JM-B is expressed in the heart.

It is found in the cell membrane. Its subcellular location is the nucleus. The protein resides in the mitochondrion. The enzyme catalyses L-tyrosyl-[protein] + ATP = O-phospho-L-tyrosyl-[protein] + ADP + H(+). With respect to regulation, binding of a cognate ligand leads to dimerization and activation by autophosphorylation on tyrosine residues. In vitro kinase activity is increased by Mg(2+). Inhibited by PD153035, lapatinib, gefitinib (iressa, ZD1839), AG1478 and BIBX1382BS. Functionally, tyrosine-protein kinase that plays an essential role as cell surface receptor for neuregulins and EGF family members and regulates development of the heart, the central nervous system and the mammary gland, gene transcription, cell proliferation, differentiation, migration and apoptosis. Required for normal cardiac muscle differentiation during embryonic development, and for postnatal cardiomyocyte proliferation. Required for normal development of the embryonic central nervous system, especially for normal neural crest cell migration and normal axon guidance. Required for mammary gland differentiation, induction of milk proteins and lactation. Acts as cell-surface receptor for the neuregulins NRG1, NRG2, NRG3 and NRG4 and the EGF family members BTC, EREG and HBEGF. Ligand binding triggers receptor dimerization and autophosphorylation at specific tyrosine residues that then serve as binding sites for scaffold proteins and effectors. Ligand specificity and signaling is modulated by alternative splicing, proteolytic processing, and by the formation of heterodimers with other ERBB family members, thereby creating multiple combinations of intracellular phosphotyrosines that trigger ligand- and context-specific cellular responses. Mediates phosphorylation of SHC1 and activation of the MAP kinases MAPK1/ERK2 and MAPK3/ERK1. Isoform JM-A CYT-1 and isoform JM-B CYT-1 phosphorylate PIK3R1, leading to the activation of phosphatidylinositol 3-kinase and AKT1 and protect cells against apoptosis. Isoform JM-A CYT-1 and isoform JM-B CYT-1 mediate reorganization of the actin cytoskeleton and promote cell migration in response to NRG1. Isoform JM-A CYT-2 and isoform JM-B CYT-2 lack the phosphotyrosine that mediates interaction with PIK3R1, and hence do not phosphorylate PIK3R1, do not protect cells against apoptosis, and do not promote reorganization of the actin cytoskeleton and cell migration. Proteolytic processing of isoform JM-A CYT-1 and isoform JM-A CYT-2 gives rise to the corresponding soluble intracellular domains (4ICD) that translocate to the nucleus, promote nuclear import of STAT5A, activation of STAT5A, mammary epithelium differentiation, cell proliferation and activation of gene expression. The ERBB4 soluble intracellular domains (4ICD) colocalize with STAT5A at the CSN2 promoter to regulate transcription of milk proteins during lactation. The ERBB4 soluble intracellular domains can also translocate to mitochondria and promote apoptosis. In Homo sapiens (Human), this protein is Receptor tyrosine-protein kinase erbB-4 (ERBB4).